The primary structure comprises 134 residues: Holo-[acyl-carrier-protein] synthase (134 aa).

The Mg(2+) site is built by Asp-8 and Glu-56.

It belongs to the P-Pant transferase superfamily. AcpS family. It depends on Mg(2+) as a cofactor.

Its subcellular location is the cytoplasm. It carries out the reaction apo-[ACP] + CoA = holo-[ACP] + adenosine 3',5'-bisphosphate + H(+). In terms of biological role, transfers the 4'-phosphopantetheine moiety from coenzyme A to a Ser of acyl-carrier-protein. In Clostridium kluyveri (strain ATCC 8527 / DSM 555 / NBRC 12016 / NCIMB 10680 / K1), this protein is Holo-[acyl-carrier-protein] synthase.